The chain runs to 427 residues: 3-phosphoshikimate 1-carboxyvinyltransferase (427 aa).

Lysine 20, serine 21, and arginine 25 together coordinate 3-phosphoshikimate. Lysine 20 is a binding site for phosphoenolpyruvate. Phosphoenolpyruvate contacts are provided by glycine 92 and arginine 120. Positions 166, 168, 312, and 339 each coordinate 3-phosphoshikimate. Phosphoenolpyruvate is bound at residue glutamine 168. Aspartate 312 (proton acceptor) is an active-site residue. The phosphoenolpyruvate site is built by arginine 343 and arginine 385.

This sequence belongs to the EPSP synthase family. Monomer.

Its subcellular location is the cytoplasm. It catalyses the reaction 3-phosphoshikimate + phosphoenolpyruvate = 5-O-(1-carboxyvinyl)-3-phosphoshikimate + phosphate. Its pathway is metabolic intermediate biosynthesis; chorismate biosynthesis; chorismate from D-erythrose 4-phosphate and phosphoenolpyruvate: step 6/7. Its function is as follows. Catalyzes the transfer of the enolpyruvyl moiety of phosphoenolpyruvate (PEP) to the 5-hydroxyl of shikimate-3-phosphate (S3P) to produce enolpyruvyl shikimate-3-phosphate and inorganic phosphate. This chain is 3-phosphoshikimate 1-carboxyvinyltransferase, found in Streptococcus agalactiae serotype III (strain NEM316).